Here is a 164-residue protein sequence, read N- to C-terminus: 2S albumin seed storage protein PINP1 (164 aa).

Residues 1–29 (MGVFSSPMSTLRWVTLFAALLSLLEWGTA) form the signal peptide. The span at 92-107 (DQSQSYDSSTDSDSQD) shows a compositional bias: low complexity. The interval 92-137 (DQSQSYDSSTDSDSQDGAPLNQRRRRRGEGRGREEEEAVERAEELP) is disordered. The segment covering 120–137 (EGRGREEEEAVERAEELP) has biased composition (basic and acidic residues). Residue Asn-138 is glycosylated (N-linked (GalNAc...) asparagine).

The protein belongs to the 2S seed storage albumins family.

The polypeptide is 2S albumin seed storage protein PINP1 (Pinus pinea (Italian stone pine)).